Consider the following 244-residue polypeptide: Pyridoxine 5'-phosphate synthase (244 aa).

Position 12 (Asn-12) interacts with 3-amino-2-oxopropyl phosphate. 14-15 is a 1-deoxy-D-xylulose 5-phosphate binding site; the sequence is DH. Arg-23 serves as a coordination point for 3-amino-2-oxopropyl phosphate. The active-site Proton acceptor is His-48. Residues Arg-50 and His-55 each coordinate 1-deoxy-D-xylulose 5-phosphate. Glu-75 acts as the Proton acceptor in catalysis. Thr-105 is a 1-deoxy-D-xylulose 5-phosphate binding site. The active-site Proton donor is the His-196. Residues Gly-197 and 218-219 contribute to the 3-amino-2-oxopropyl phosphate site; that span reads GH.

Belongs to the PNP synthase family. As to quaternary structure, homooctamer; tetramer of dimers.

Its subcellular location is the cytoplasm. It catalyses the reaction 3-amino-2-oxopropyl phosphate + 1-deoxy-D-xylulose 5-phosphate = pyridoxine 5'-phosphate + phosphate + 2 H2O + H(+). The protein operates within cofactor biosynthesis; pyridoxine 5'-phosphate biosynthesis; pyridoxine 5'-phosphate from D-erythrose 4-phosphate: step 5/5. Its function is as follows. Catalyzes the complicated ring closure reaction between the two acyclic compounds 1-deoxy-D-xylulose-5-phosphate (DXP) and 3-amino-2-oxopropyl phosphate (1-amino-acetone-3-phosphate or AAP) to form pyridoxine 5'-phosphate (PNP) and inorganic phosphate. In Alcanivorax borkumensis (strain ATCC 700651 / DSM 11573 / NCIMB 13689 / SK2), this protein is Pyridoxine 5'-phosphate synthase.